The following is a 374-amino-acid chain: MSVATLQRKLPEAAPRRAGQTELHPELNRAQVRFIGLGKTYQGQQGPVQALHDIDLSIQRGEVFGIIGRSGAGKSSLIRTINRLEQPSSGRVLIDQVDIGDFDEDRLVALRRRIGMIFQHFNLMSAKTVWHNVELPLKVAGVPKAERERKVRELLELVGLKDKHRAYPAQLSGGQKQRVGIARALVHDPEILLCDEATSALDPETTQSILGLLKEINQRLGLTIILITHEMAVIRDICDRVVVLEHGRIVEQGPVWEVFGNPQHEVSKTLLAPLQHGLPEELQNRLQSHPTSSDAALVLSLRFTGSSHEEPDLAALFGALGGRVRLLQGGVERIQGHALGQLLLAVQGSSLEAAQLRQRAGQWAQQVEVLGYVV.

The interval 1–22 (MSVATLQRKLPEAAPRRAGQTE) is disordered. An ABC transporter domain is found at 32-271 (VRFIGLGKTY…PQHEVSKTLL (240 aa)). 68 to 75 (GRSGAGKS) is an ATP binding site.

This sequence belongs to the ABC transporter superfamily. Methionine importer (TC 3.A.1.24) family. The complex is composed of two ATP-binding proteins (MetN), two transmembrane proteins (MetI) and a solute-binding protein (MetQ).

The protein resides in the cell inner membrane. The catalysed reaction is L-methionine(out) + ATP + H2O = L-methionine(in) + ADP + phosphate + H(+). It catalyses the reaction D-methionine(out) + ATP + H2O = D-methionine(in) + ADP + phosphate + H(+). In terms of biological role, part of the ABC transporter complex MetNIQ involved in methionine import. Responsible for energy coupling to the transport system. The protein is Methionine import ATP-binding protein MetN 2 of Pseudomonas fluorescens (strain ATCC BAA-477 / NRRL B-23932 / Pf-5).